A 332-amino-acid chain; its full sequence is dTDP-3,4-didehydro-2,6-dideoxy-alpha-D-glucose 3-reductase (332 aa).

Residue 17–23 (CADIAWR) coordinates NADP(+). Arg-24 serves as a coordination point for substrate. Residues 42 to 43 (SR), Tyr-63, Leu-79, and His-84 each bind NADP(+). Catalysis depends on Lys-102, which acts as the Proton donor. Positions 170 and 182 each coordinate NADP(+). Positions 240 and 260 each coordinate substrate.

This sequence belongs to the Gfo/Idh/MocA family. In terms of assembly, homotetramer; dimer of dimers.

It catalyses the reaction dTDP-4-dehydro-2,6-dideoxy-alpha-D-glucose + NADP(+) = dTDP-3,4-didehydro-2,6-dideoxy-alpha-D-glucose + NADPH + H(+). The protein operates within antibiotic biosynthesis. Functionally, involved in the biosynthesis of L-digitoxose, an unusual dideoxysugar attached to various pharmacologically active natural products, including the antitumor antibiotic tetrocarcin A, and the antibiotics kijanimicin and jadomycin B. Catalyzes the reduction of the C-3 keto moiety of dTDP-3,4-diketo-2,6-dideoxy-alpha-D-glucose to yield dTDP-4-keto-2,6-dideoxy-alpha-D-glucose. Also able to reduce dTDP-3-keto-6-deoxy-D-galactose and dTDP-3-keto-6-deoxy-D-glucose to yield dTDP-fucose and dTDP-quinovose, respectively. The protein is dTDP-3,4-didehydro-2,6-dideoxy-alpha-D-glucose 3-reductase of Actinomadura kijaniata.